A 492-amino-acid chain; its full sequence is Steroid 21-hydroxylase (492 aa).

Heme b contacts are provided by arginine 91 and lysine 120. Arginine 231 contributes to the 17alpha-hydroxyprogesterone binding site. Arginine 231 is a progesterone binding site. Histidine 363, arginine 424, and cysteine 426 together coordinate heme b.

The protein belongs to the cytochrome P450 family. The cofactor is heme b.

The protein resides in the endoplasmic reticulum membrane. It localises to the microsome membrane. It carries out the reaction 17alpha-hydroxyprogesterone + reduced [NADPH--hemoprotein reductase] + O2 = 11-deoxycortisol + oxidized [NADPH--hemoprotein reductase] + H2O + H(+). The enzyme catalyses progesterone + reduced [NADPH--hemoprotein reductase] + O2 = 21-hydroxyprogesterone + oxidized [NADPH--hemoprotein reductase] + H2O + H(+). Its function is as follows. Specifically catalyzes the 21-hydroxylation of steroids. Required for the adrenal synthesis of mineralocorticoids and glucocorticoids. This chain is Steroid 21-hydroxylase (CYP21), found in Felis catus (Cat).